A 580-amino-acid chain; its full sequence is Probable inositol transporter 2 (580 aa).

12 consecutive transmembrane segments (helical) span residues 36-56, 71-91, 106-126, 129-149, 156-176, 189-209, 275-295, 315-335, 343-363, 452-472, 490-510, and 521-541; these read GIGG…LLYI, EMIV…GGWA, FLFL…LLVV, VFVG…ISEA, GALV…SYLI, WMLG…FTLP, GLIA…NTVM, LLSL…IYFI, LLII…GVFY, FGWF…PGMG, ICGG…AQSF, and WTFL…MVCV.

The protein belongs to the major facilitator superfamily. Sugar transporter (TC 2.A.1.1) family. Expressed in the tapetum, but not in pollen grains. Detected in leaf vascular tissue and in roots.

The protein resides in the cell membrane. With respect to regulation, inhibited by nickel and to a lesser extent by cobalt. Its function is as follows. Plasma membrane inositol-proton symporter. Specific for several inositol epimers, such as myoinositol and scylloinositol. D-chiroinositol, mucoinositol, alloinositol and pinitol are also transported with a lower activity. Not active with galactinol and phytate. This Arabidopsis thaliana (Mouse-ear cress) protein is Probable inositol transporter 2 (INT2).